The chain runs to 282 residues: Cyclic AMP-dependent transcription factor ATF-5 (282 aa).

Positions 1-21 (MSLLATLGLELDRALLPASGL) are required for protein stabilization induced by IL1B. Lys-29 carries the N6-acetyllysine; by EP300 modification. Disordered regions lie at residues 116–152 (FLDAPPLPPPSPPPLPPPPLPPAPSLPLSLPSFDLPQ) and 173–238 (EEVG…ALEG). The segment at 119–217 (APPLPPPSPP…GDRKQKKRDQ (99 aa)) is interaction with PTP4A1. The span at 120 to 140 (PPLPPPSPPPLPPPPLPPAPS) shows a compositional bias: pro residues. Low complexity predominate over residues 141 to 150 (LPLSLPSFDL). A compositionally biased stretch (pro residues) spans 178 to 194 (PPLPPPQQPPPPSPPQP). The bZIP domain occupies 208–271 (GDRKQKKRDQ…QYVKDLLIEV (64 aa)). Residues 210–230 (RKQKKRDQNKSAALRYRQRKR) are basic motif. The leucine-zipper stretch occupies residues 236–250 (LEGECQGLEARNREL). Ser-256 bears the Phosphoserine mark.

The protein belongs to the bZIP family. In terms of assembly, binds DNA as a dimer. Interacts with PTP4A1/PRL-1. Interacts with CCND3, but not with CCND1 or CCND2. Interacts with HSPA1A or HSPA1B; the interaction protects ATF5 from degradation via proteasome-dependent and caspase-dependent processes. Interacts (via C-terminal region) with NPM1 (via C-terminal region); the interaction leads to loss of association between HSPA1A or HSPA1B and ATF5 and promotes ATF5 degradation via proteasome-dependent and caspase-dependent processes. Interacts with NLK; the interaction stabilizes ATF5 at the protein level in a kinase-independent manner. Interacts with alpha-tubulin, gamma-tubulin members TUBGCP2 and TUBGCP4, PCNT; the ATF5:PCNT:polyglutamylated tubulin (PGT) tripartite unites the mother centriole and the pericentriolar material (PCM) in the centrosome. Interacts with CEBPB and EP300; EP300 is required for ATF5 and CEBPB interaction and DNA binding. Ubiquitinated by CDC34 and UBE2B in order to be degraded by the proteasome. Cisplatin inhibits ubiquitination and proteasome-mediated degradation by inhibiting the interaction with CDC34. Ubiquitination and degradation by the proteasome are inhibited by NLK in a kinase-independent manner. In terms of processing, phosphorylated by NLK, probably at Ser-92, Thr-94, Ser-126 and Ser-190. Post-translationally, acetylated at Lys-29 by EP300, the acetylation enhances the interaction with CEBPB, DNA-binding and transactivation activity. Widely expressed with higher expression levels in liver.

The protein localises to the cytoplasm. It is found in the nucleus. The protein resides in the cytoskeleton. It localises to the microtubule organizing center. Its subcellular location is the centrosome. Its function is as follows. Transcription factor that either stimulates or represses gene transcription through binding of different DNA regulatory elements such as cAMP response element (CRE) (consensus: 5'-GTGACGT[AC][AG]-3'), ATF5-specific response element (ARE) (consensus: 5'-C[CT]TCT[CT]CCTT[AT]-3') but also the amino acid response element (AARE), present in many viral and cellular promoters. Critically involved, often in a cell type-dependent manner, in cell survival, proliferation, and differentiation. Its transcriptional activity is enhanced by CCND3 and slightly inhibited by CDK4. Important regulator of the cerebral cortex formation, functions in cerebral cortical neuroprogenitor cells to maintain proliferation and to block differentiation into neurons. Must be down-regulated in order for such cells to exit the cycle and differentiate. Participates in the pathways by which SHH promotes cerebellar granule neuron progenitor cells proliferation. Critical for survival of mature olfactory sensory neurons (OSN), directs expression of OSN-specific genes. May be involved in osteogenic differentiation. Promotes cell proliferation and survival by inducing the expression of EGR1 sinergistically with ELK1. Once acetylated by EP300, binds to ARE sequences on target genes promoters, such as BCL2 and EGR1. Plays an anti-apoptotic role through the transcriptional regulation of BCL2, this function seems to be cell type-dependent. Cooperates with NR1I3/CAR in the transcriptional activation of CYP2B6 in liver. In hepatic cells, represses CRE-dependent transcription and inhibits proliferation by blocking at G2/M phase. May act as a negative regulator of IL1B transduction pathway in liver. Upon IL1B stimulus, cooperates with NLK to activate the transactivation activity of C/EBP subfamily members. Besides its function of transcription factor, acts as a cofactor of CEBPB to activate CEBPA and promote adipocyte differentiation. Regulates centrosome dynamics in a cell-cycle- and centriole-age-dependent manner. Forms 9-foci symmetrical ring scaffold around the mother centriole to control centrosome function and the interaction between centrioles and pericentriolar material. This Homo sapiens (Human) protein is Cyclic AMP-dependent transcription factor ATF-5 (ATF5).